Reading from the N-terminus, the 212-residue chain is HTH-type transcriptional repressor NicS (212 aa).

The region spanning 14-74 (DRTRDNILKA…SVLEHIYASF (61 aa)) is the HTH tetR-type domain. A DNA-binding region (H-T-H motif) is located at residues 37 to 56 (RIEQISTLAKSNDRMIYYYF).

It functions in the pathway cofactor degradation; nicotinate degradation [regulation]. Its function is as follows. Transcriptional repressor for the nicAB operon, encoding the upper aerobic nicotinate degradation pathway. Acts under non-induced conditions: repression of the nicAB operon becomes alleviated in presence of either nicotinate or 6-hydroxynicotinate (6HNA). This chain is HTH-type transcriptional repressor NicS (nicS), found in Pseudomonas putida (strain ATCC 47054 / DSM 6125 / CFBP 8728 / NCIMB 11950 / KT2440).